Consider the following 164-residue polypeptide: Cell cycle link protein (164 aa).

The interval 9-22 (LPEELKEKIMNEHL) is binding to host SKP1 protein. The short motif at 111 to 115 (LYCSE) is the LXCXE motif, interaction with host RBR element.

Belongs to the nanovirus Clink protein family. In terms of assembly, interacts with host SKP1. Interacts (via LXCXE domain) with host retinoblastoma-related protein 1 (RBR1). Interacts (via LXCXE domain) with retinoblastoma-related proteins (RBR).

Interacts with and disrupts the function of host retinoblastoma-related proteins RBR, which are key regulators of the cell cycle. Induces transcriptional activation of E2F-regulated S-phase and G2/M-phase-specific genes. Inactivation of the ability of RBR to arrest the cell cycle leads to the stimulation of viral DNA replication. In Trifolium subterraneum (Subterranean clover), this protein is Cell cycle link protein (DNA-C).